We begin with the raw amino-acid sequence, 339 residues long: Ketol-acid reductoisomerase (NADP(+)) (339 aa).

The KARI N-terminal Rossmann domain occupies methionine 1 to threonine 182. NADP(+) contacts are provided by residues tyrosine 24 to glutamine 27, arginine 48, serine 51, threonine 53, and aspartate 83 to glutamine 86. Histidine 108 is a catalytic residue. An NADP(+)-binding site is contributed by glycine 134. In terms of domain architecture, KARI C-terminal knotted spans threonine 183 to isoleucine 328. Residues aspartate 191, glutamate 195, glutamate 227, and glutamate 231 each contribute to the Mg(2+) site. Serine 252 contributes to the substrate binding site.

The protein belongs to the ketol-acid reductoisomerase family. Mg(2+) is required as a cofactor.

It carries out the reaction (2R)-2,3-dihydroxy-3-methylbutanoate + NADP(+) = (2S)-2-acetolactate + NADPH + H(+). It catalyses the reaction (2R,3R)-2,3-dihydroxy-3-methylpentanoate + NADP(+) = (S)-2-ethyl-2-hydroxy-3-oxobutanoate + NADPH + H(+). Its pathway is amino-acid biosynthesis; L-isoleucine biosynthesis; L-isoleucine from 2-oxobutanoate: step 2/4. The protein operates within amino-acid biosynthesis; L-valine biosynthesis; L-valine from pyruvate: step 2/4. Functionally, involved in the biosynthesis of branched-chain amino acids (BCAA). Catalyzes an alkyl-migration followed by a ketol-acid reduction of (S)-2-acetolactate (S2AL) to yield (R)-2,3-dihydroxy-isovalerate. In the isomerase reaction, S2AL is rearranged via a Mg-dependent methyl migration to produce 3-hydroxy-3-methyl-2-ketobutyrate (HMKB). In the reductase reaction, this 2-ketoacid undergoes a metal-dependent reduction by NADPH to yield (R)-2,3-dihydroxy-isovalerate. The chain is Ketol-acid reductoisomerase (NADP(+)) from Brucella suis (strain ATCC 23445 / NCTC 10510).